A 349-amino-acid chain; its full sequence is Protein Wnt-7a (349 aa).

A signal peptide spans 1–31 (MNRKARRCLGHLFLSLGMVYLRIGGFSSVVA). Cystine bridges form between Cys73–Cys84, Cys123–Cys131, Cys133–Cys152, Cys200–Cys214, and Cys202–Cys209. N-linked (GlcNAc...) asparagine glycans are attached at residues Asn83 and Asn127. Ser206 carries the O-palmitoleoyl serine; by PORCN lipid modification. The tract at residues 238 to 266 (VEPVRASRNKRPTFLKIKKPLSYRKPMDT) is disordered linker. 6 disulfides stabilise this stretch: Cys278–Cys309, Cys294–Cys304, Cys308–Cys348, Cys324–Cys339, Cys326–Cys336, and Cys331–Cys332. The N-linked (GlcNAc...) asparagine glycan is linked to Asn295.

This sequence belongs to the Wnt family. In terms of assembly, forms a soluble 1:1 complex with AFM; this prevents oligomerization and is required for prolonged biological activity. The complex with AFM may represent the physiological form in body fluids. Interacts with PORCN. Interacts (via intrinsically disordered linker region) with RECK; interaction with RECK confers ligand selectivity for Wnt7 in brain endothelial cells and allows these cells to selectively respond to Wnt7. Interacts with FZD5. Post-translationally, palmitoleoylation is required for efficient binding to frizzled receptors. Depalmitoleoylation leads to Wnt signaling pathway inhibition.

It is found in the secreted. It localises to the extracellular space. The protein localises to the extracellular matrix. Its function is as follows. Ligand for members of the frizzled family of seven transmembrane receptors that functions in the canonical Wnt/beta-catenin signaling pathway. Plays an important role in embryonic development, including dorsal versus ventral patterning during limb development, skeleton development and urogenital tract development. Required for central nervous system (CNS) angiogenesis and blood-brain barrier regulation. Required for normal, sexually dimorphic development of the Mullerian ducts, and for normal fertility in both sexes. Required for normal neural stem cell proliferation in the hippocampus dentate gyrus. Required for normal progress through the cell cycle in neural progenitor cells, for self-renewal of neural stem cells, and for normal neuronal differentiation and maturation. Promotes formation of synapses via its interaction with FZD5. The protein is Protein Wnt-7a (WNT7A) of Pongo pygmaeus (Bornean orangutan).